The sequence spans 352 residues: Phosphate acyltransferase (352 aa).

It belongs to the PlsX family. Homodimer. Probably interacts with PlsY.

It localises to the cytoplasm. The catalysed reaction is a fatty acyl-[ACP] + phosphate = an acyl phosphate + holo-[ACP]. Its pathway is lipid metabolism; phospholipid metabolism. Its function is as follows. Catalyzes the reversible formation of acyl-phosphate (acyl-PO(4)) from acyl-[acyl-carrier-protein] (acyl-ACP). This enzyme utilizes acyl-ACP as fatty acyl donor, but not acyl-CoA. This chain is Phosphate acyltransferase, found in Brucella anthropi (strain ATCC 49188 / DSM 6882 / CCUG 24695 / JCM 21032 / LMG 3331 / NBRC 15819 / NCTC 12168 / Alc 37) (Ochrobactrum anthropi).